A 313-amino-acid chain; its full sequence is Porphobilinogen deaminase (313 aa).

Position 242 is an S-(dipyrrolylmethanemethyl)cysteine (Cys-242).

It belongs to the HMBS family. As to quaternary structure, monomer. The cofactor is dipyrromethane.

It catalyses the reaction 4 porphobilinogen + H2O = hydroxymethylbilane + 4 NH4(+). Its pathway is porphyrin-containing compound metabolism; protoporphyrin-IX biosynthesis; coproporphyrinogen-III from 5-aminolevulinate: step 2/4. Its function is as follows. Tetrapolymerization of the monopyrrole PBG into the hydroxymethylbilane pre-uroporphyrinogen in several discrete steps. This Pectobacterium carotovorum subsp. carotovorum (strain PC1) protein is Porphobilinogen deaminase.